The chain runs to 298 residues: Lipoyl synthase (298 aa).

Positions 43, 48, 54, 69, 73, 76, and 280 each coordinate [4Fe-4S] cluster. The region spanning 55–269 (FSSGTATFLI…AACGRGMGIP (215 aa)) is the Radical SAM core domain.

This sequence belongs to the radical SAM superfamily. Lipoyl synthase family. The cofactor is [4Fe-4S] cluster.

It localises to the cytoplasm. The enzyme catalyses [[Fe-S] cluster scaffold protein carrying a second [4Fe-4S](2+) cluster] + N(6)-octanoyl-L-lysyl-[protein] + 2 oxidized [2Fe-2S]-[ferredoxin] + 2 S-adenosyl-L-methionine + 4 H(+) = [[Fe-S] cluster scaffold protein] + N(6)-[(R)-dihydrolipoyl]-L-lysyl-[protein] + 4 Fe(3+) + 2 hydrogen sulfide + 2 5'-deoxyadenosine + 2 L-methionine + 2 reduced [2Fe-2S]-[ferredoxin]. The protein operates within protein modification; protein lipoylation via endogenous pathway; protein N(6)-(lipoyl)lysine from octanoyl-[acyl-carrier-protein]: step 2/2. In terms of biological role, catalyzes the radical-mediated insertion of two sulfur atoms into the C-6 and C-8 positions of the octanoyl moiety bound to the lipoyl domains of lipoate-dependent enzymes, thereby converting the octanoylated domains into lipoylated derivatives. This is Lipoyl synthase from Nitratidesulfovibrio vulgaris (strain ATCC 29579 / DSM 644 / CCUG 34227 / NCIMB 8303 / VKM B-1760 / Hildenborough) (Desulfovibrio vulgaris).